The chain runs to 309 residues: Taste receptor type 2 member 8 (309 aa).

Residues 1–7 (MFSPADN) lie on the Extracellular side of the membrane. Residues 8 to 28 (IFIILITGEFILGILGNGYIA) traverse the membrane as a helical segment. Topologically, residues 29–50 (LVNWIDWIKKKKISTIDYILTN) are cytoplasmic. The helical transmembrane segment at 51-71 (LVISRICLISVMVVNGIVIAV) threads the bilayer. The Extracellular segment spans residues 72-82 (YPDVYTKSKLQ). The chain crosses the membrane as a helical span at residues 83–103 (IAICTFWTFANYLNMWITTCL). The Cytoplasmic segment spans residues 104-131 (NVFYFLKIANSSHPLFLWLKQKIDMVVR). A helical transmembrane segment spans residues 132–152 (WILLGCFAISLLVSLIAAIVL). The Extracellular portion of the chain corresponds to 153–184 (SYDYRFHAIAKHKRNITEMFHVSKRPYFEPLT). Asn167 carries N-linked (GlcNAc...) asparagine glycosylation. Residues 185-205 (LFNLFAIVPFIVSLISFFLLV) form a helical membrane-spanning segment. Residues 206 to 239 (RSLWRHTKQIKLYATGGRDPSTEVHVRAIKTMTS) are Cytoplasmic-facing. The helical transmembrane segment at 240-260 (FIFLFFLYYISSILVTFSYLM) threads the bilayer. Over 261 to 266 (TKYKLA) the chain is Extracellular. The helical transmembrane segment at 267–287 (VEFGEIVAILYPLGHSLILIV) threads the bilayer. The Cytoplasmic segment spans residues 288–309 (LNNKLRQTFVRMLTCRKIACVI).

It belongs to the G-protein coupled receptor T2R family.

It localises to the membrane. Receptor that may play a role in the perception of bitterness and is gustducin-linked. May play a role in sensing the chemical composition of the gastrointestinal content. The activity of this receptor may stimulate alpha gustducin, mediate PLC-beta-2 activation and lead to the gating of TRPM5. The polypeptide is Taste receptor type 2 member 8 (TAS2R8) (Gorilla gorilla gorilla (Western lowland gorilla)).